The chain runs to 5911 residues: Nonribosomal peptide synthetase 30 (5911 aa).

The interval 1–22 (MVPEKPTAQSKSGIGEPFRAGD) is disordered. Positions 352-754 (ALIQPSSTAV…GRKDAQVKIR (403 aa)) are adenylation 1. One can recognise a Carrier 1 domain in the interval 891 to 968 (PRPFSVEYSL…EAAAIVARGT (78 aa)). S928 is subject to O-(pantetheine 4'-phosphoryl)serine. The condensation 1 stretch occupies residues 1007-1422 (EDAFPCTPLQ…ERLIFVIDQL (416 aa)). The interval 1467-1865 (ERALSQPDRP…SLMFVGRKAD (399 aa)) is adenylation 2. Residues 2001–2077 (QPTSELEAEM…NICSHSYYCS (77 aa)) enclose the Carrier 2 domain. S2038 is modified (O-(pantetheine 4'-phosphoryl)serine). Residues 2121 to 2538 (QDAYPCTPLQ…GPDINMSDIG (418 aa)) form a condensation 2 region. The interval 2568 to 2977 (EEQARLRPEA…GRKDSQVKIR (410 aa)) is adenylation 3. Positions 3110–3186 (QPSTNAQREL…LIADNSKSIK (77 aa)) constitute a Carrier 3 domain. S3147 is subject to O-(pantetheine 4'-phosphoryl)serine. Positions 3227–3652 (VQDAYPCTPL…LELVIQAFMA (426 aa)) are condensation 3. Residues 3701–4108 (EERVREQPNA…GRKDSQVKIR (408 aa)) form an adenylation 4 region. One can recognise a Carrier 4 domain in the interval 4248-4325 (PPTTPLECQM…DIIATMTKNK (78 aa)). O-(pantetheine 4'-phosphoryl)serine is present on S4285. A disordered region spans residues 4326-4347 (ATGASRRLPRDDDEPIPHTKYA). The interval 4353–4793 (SYAQGRLWFL…SLPLLTEDGR (441 aa)) is condensation 4. Positions 4819–5231 (FKEQVSRHPN…GRMDVQVKIR (413 aa)) are adenylation 5. One can recognise a Carrier 5 domain in the interval 5360-5436 (KPTTDMEVAL…ALARRQEEIV (77 aa)). S5397 is subject to O-(pantetheine 4'-phosphoryl)serine. The segment at 5474 to 5828 (VEDMLPLTSM…GIKMKLHFFT (355 aa)) is condensation 5.

The protein belongs to the NRP synthetase family.

It participates in secondary metabolite biosynthesis. Functionally, nonribosomal peptide synthetase; part of the gene cluster that mediates the biosynthesis of sansalvamide, a cyclic pentadepsipeptide that shows promising results as potential anti-cancer drug. The nonribosmal peptide synthetase NRPS30 produces sansalvamide by incorporating successively one phenylalanine, one leucine, one alpha-hydroxyisocaproic acid (HICA), one valine and one leucine before sansalvamide is released from by cyclization by the terminal C domain of NRPS30. The HICA residue is probably provided by reduction of alpha-ketoisocaproate by the cluster-specific aldo-keto reductase (NECHADRAFT_45914). In Fusarium vanettenii (strain ATCC MYA-4622 / CBS 123669 / FGSC 9596 / NRRL 45880 / 77-13-4) (Fusarium solani subsp. pisi), this protein is Nonribosomal peptide synthetase 30.